A 281-amino-acid chain; its full sequence is Bifunctional protein FolD (281 aa).

Residues 164–166 and Ser189 contribute to the NADP(+) site; that span reads GRS.

The protein belongs to the tetrahydrofolate dehydrogenase/cyclohydrolase family. In terms of assembly, homodimer.

The catalysed reaction is (6R)-5,10-methylene-5,6,7,8-tetrahydrofolate + NADP(+) = (6R)-5,10-methenyltetrahydrofolate + NADPH. The enzyme catalyses (6R)-5,10-methenyltetrahydrofolate + H2O = (6R)-10-formyltetrahydrofolate + H(+). The protein operates within one-carbon metabolism; tetrahydrofolate interconversion. In terms of biological role, catalyzes the oxidation of 5,10-methylenetetrahydrofolate to 5,10-methenyltetrahydrofolate and then the hydrolysis of 5,10-methenyltetrahydrofolate to 10-formyltetrahydrofolate. This Enterococcus faecalis (strain ATCC 700802 / V583) protein is Bifunctional protein FolD.